The following is a 223-amino-acid chain: Adenylate kinase (223 aa).

Residue 10 to 15 coordinates ATP; that stretch reads GSGKGT. Positions 30-59 are NMP; it reads ESGAIFRKHIGGGTELGMKAKEYIDKGELV. AMP-binding positions include Ser-31, Arg-36, 57–59, 84–87, and Gln-91; these read ELV and GFPR. Residues 125 to 164 are LID; it reads GRRLCENDPNHPNNKFIDAIKPDGDKCRVCGGALSERADD. Arg-126 serves as a coordination point for ATP. 2 residues coordinate AMP: Arg-161 and Arg-173. Gly-209 serves as a coordination point for ATP.

This sequence belongs to the adenylate kinase family. In terms of assembly, monomer.

It is found in the cytoplasm. It catalyses the reaction AMP + ATP = 2 ADP. It functions in the pathway purine metabolism; AMP biosynthesis via salvage pathway; AMP from ADP: step 1/1. Functionally, catalyzes the reversible transfer of the terminal phosphate group between ATP and AMP. Plays an important role in cellular energy homeostasis and in adenine nucleotide metabolism. This Maridesulfovibrio salexigens (strain ATCC 14822 / DSM 2638 / NCIMB 8403 / VKM B-1763) (Desulfovibrio salexigens) protein is Adenylate kinase.